The following is a 92-amino-acid chain: Small ribosomal subunit protein uS19 (92 aa).

Belongs to the universal ribosomal protein uS19 family.

In terms of biological role, protein S19 forms a complex with S13 that binds strongly to the 16S ribosomal RNA. This chain is Small ribosomal subunit protein uS19, found in Geobacillus sp. (strain WCH70).